A 377-amino-acid chain; its full sequence is Polar flagellin F (377 aa).

Coiled-coil stretches lie at residues 98 to 131 and 302 to 339; these read QSAN…ETTS and DSQR…IQDT.

It belongs to the bacterial flagellin family. In terms of assembly, heteromer of multiple flagellin subunits including FlaA, FlaB/D, FlaC, FlaE and FlaF.

The protein resides in the secreted. It is found in the bacterial flagellum. Its function is as follows. Flagellin is the subunit protein which polymerizes to form the filaments of bacterial flagella. This is Polar flagellin F (flaF) from Vibrio parahaemolyticus serotype O3:K6 (strain RIMD 2210633).